The chain runs to 207 residues: Large ribosomal subunit protein bL25 (207 aa).

The protein belongs to the bacterial ribosomal protein bL25 family. CTC subfamily. As to quaternary structure, part of the 50S ribosomal subunit; part of the 5S rRNA/L5/L18/L25 subcomplex. Contacts the 5S rRNA. Binds to the 5S rRNA independently of L5 and L18.

Functionally, this is one of the proteins that binds to the 5S RNA in the ribosome where it forms part of the central protuberance. The chain is Large ribosomal subunit protein bL25 from Orientia tsutsugamushi (strain Boryong) (Rickettsia tsutsugamushi).